We begin with the raw amino-acid sequence, 103 residues long: Histone H4, major (103 aa).

Residues 1-12 (MAGGKGGKGMGK) are compositionally biased toward gly residues. Residues 1 to 29 (MAGGKGGKGMGKVGAKRHSKRSNKASIEG) are disordered. 4 positions are modified to N6-acetyllysine: Lys5, Lys8, Lys12, and Lys16. Residues 14–23 (GAKRHSKRSN) show a composition bias toward basic residues. A DNA-binding region spans residues 16–21 (KRHSKR).

Belongs to the histone H4 family. The nucleosome is a histone octamer containing two molecules each of H2A, H2B, H3 and H4 assembled in one H3-H4 heterotetramer and two H2A-H2B heterodimers. The octamer wraps approximately 147 bp of DNA.

It localises to the nucleus. The protein resides in the chromosome. Its function is as follows. Core component of nucleosome. Nucleosomes wrap and compact DNA into chromatin, limiting DNA accessibility to the cellular machineries which require DNA as a template. Histones thereby play a central role in transcription regulation, DNA repair, DNA replication and chromosomal stability. DNA accessibility is regulated via a complex set of post-translational modifications of histones, also called histone code, and nucleosome remodeling. The polypeptide is Histone H4, major (Tetrahymena pyriformis).